We begin with the raw amino-acid sequence, 403 residues long: tRNA(Met) cytidine acetate ligase (403 aa).

ATP-binding positions include Ile-7 to His-20, Gly-102, Asn-168, and Arg-193.

This sequence belongs to the TmcAL family.

It is found in the cytoplasm. It catalyses the reaction cytidine(34) in elongator tRNA(Met) + acetate + ATP = N(4)-acetylcytidine(34) in elongator tRNA(Met) + AMP + diphosphate. Catalyzes the formation of N(4)-acetylcytidine (ac(4)C) at the wobble position of elongator tRNA(Met), using acetate and ATP as substrates. First activates an acetate ion to form acetyladenylate (Ac-AMP) and then transfers the acetyl group to tRNA to form ac(4)C34. The chain is tRNA(Met) cytidine acetate ligase from Clostridium tetani (strain Massachusetts / E88).